A 261-amino-acid chain; its full sequence is uncharacterized protein (261 aa).

Residues 1–22 form the signal peptide; it reads MRDSKRVVLYISIMVLSIFIIG. C23 carries N-palmitoyl cysteine lipidation. The S-diacylglycerol cysteine moiety is linked to residue C23.

Belongs to the staphylococcal tandem lipoprotein family.

It localises to the cell membrane. This is an uncharacterized protein from Staphylococcus aureus (strain N315).